Reading from the N-terminus, the 578-residue chain is Glutathione hydrolase 2 (578 aa).

Residues 1-26 form the signal peptide; it reads MNSFMSLVRTATIALLLIAFLQNANA. N94 is a glycosylation site (N-linked (GlcNAc...) asparagine). Residue R103 coordinates L-glutamate. Residues N176 and N227 are each glycosylated (N-linked (GlcNAc...) asparagine). T374 serves as the catalytic Nucleophile. L-glutamate is bound by residues T392, N394, E413, D416, 446 to 447, and 467 to 468; these read SS and GG. N-linked (GlcNAc...) asparagine glycosylation occurs at N511.

This sequence belongs to the gamma-glutamyltransferase family. In terms of tissue distribution, expressed in roots, immature trichomes and pollen. In developing siliques, specifically expressed in the embryo, endosperm, outer integument and a small portion of the funiculus.

Its subcellular location is the secreted. The protein resides in the extracellular space. It localises to the apoplast. The catalysed reaction is an N-terminal (5-L-glutamyl)-[peptide] + an alpha-amino acid = 5-L-glutamyl amino acid + an N-terminal L-alpha-aminoacyl-[peptide]. It catalyses the reaction glutathione + H2O = L-cysteinylglycine + L-glutamate. It carries out the reaction an S-substituted glutathione + H2O = an S-substituted L-cysteinylglycine + L-glutamate. Its pathway is sulfur metabolism; glutathione metabolism. May be required for glutathione transport into developing seeds. In Arabidopsis thaliana (Mouse-ear cress), this protein is Glutathione hydrolase 2 (GGT2).